A 338-amino-acid polypeptide reads, in one-letter code: VQEPSEPDCMLGIGKGYQGKKATTVTGTRCQAWAAQEPHRHSIFTPEANPWANLEKNYCRNPDGDVNGPWCYTMNPQKLFDYCDVPQCESSPFDCGKPKVEPKKCSGRIVGGCVAIAHSWPWQISLRTRFGRHFCGGTLISPEWVLTAAHCLERSSRPSTYKVVLGTHHELRLAAGAQQIDVSKLFLEPSRADIALLKLSSPAIITQNVIPACLPPADYVVANWAECFVTGWGETQDSSNAGVLKEAQLPVIENKVCNRYEYLNGRVKSTELCAGHLVGGVDSCQGDSGGPLVCFEKDKYILQGVTSWGLGCARPNKPGVYVRVSSFINWIERIMQSN.

The Kringle 5 domain occupies 9-88 (CMLGIGKGYQ…LFDYCDVPQC (80 aa)). Intrachain disulfides connect Cys9-Cys88, Cys30-Cys71, Cys59-Cys83, Cys95-Cys213, Cys105-Cys113, Cys135-Cys151, Cys227-Cys294, Cys257-Cys273, and Cys284-Cys312. A Peptidase S1 domain is found at 109-336 (IVGGCVAIAH…FINWIERIMQ (228 aa)). Ser125 is modified (phosphoserine). Catalysis depends on charge relay system residues His150 and Asp193. Ser288 (charge relay system) is an active-site residue.

The protein belongs to the peptidase S1 family. Plasminogen subfamily. Interacts with CSPG4 and AMOT. Interacts (via the Kringle domains) with HRG; the interaction tethers PLG to the cell surface and enhances its activation. Interacts (via Kringle 4 domain) with ADA; the interaction stimulates PLG activation when in complex with DPP4. Angiostatin: Interacts with ATP5F1A; the interaction inhibits most of the angiogenic effects of angiostatin.

It is found in the secreted. It carries out the reaction Preferential cleavage: Lys-|-Xaa &gt; Arg-|-Xaa, higher selectivity than trypsin. Converts fibrin into soluble products.. With respect to regulation, converted into plasmin by plasminogen activators, both plasminogen and its activator being bound to fibrin. Activated with catalytic amounts of streptokinase. Functionally, plasmin dissolves the fibrin of blood clots and acts as a proteolytic factor in a variety of other processes including embryonic development, tissue remodeling, tumor invasion, and inflammation. In ovulation, weakens the walls of the Graafian follicle. It activates the urokinase-type plasminogen activator, collagenases and several complement zymogens, such as C1, C4 and C5. Cleavage of fibronectin and laminin leads to cell detachment and apoptosis. Also cleaves fibrin, thrombospondin and von Willebrand factor. Its role in tissue remodeling and tumor invasion may be modulated by CSPG4. Binds to cells. The sequence is that of Plasminogen (PLG) from Equus caballus (Horse).